Consider the following 116-residue polypeptide: Probable transcriptional regulator WhiB6 (116 aa).

[4Fe-4S] cluster-binding residues include Cys12, Cys53, Cys56, and Cys62. Residues 33 to 86 (VCTQDPDRWTTTPDDEAKTLCRACPRRWLCARDAVESAGAEGLWAGVVIPESGR) enclose the 4Fe-4S Wbl-type domain.

This sequence belongs to the WhiB family. [4Fe-4S] cluster serves as cofactor. The Fe-S cluster can be nitrosylated by nitric oxide (NO). Post-translationally, upon Fe-S cluster removal intramolecular disulfide bonds are formed.

The protein resides in the cytoplasm. Acts as a transcriptional regulator. Probably redox-responsive. The apo- but not holo-form probably binds DNA. The protein is Probable transcriptional regulator WhiB6 (whiB6) of Mycobacterium tuberculosis (strain CDC 1551 / Oshkosh).